A 223-amino-acid chain; its full sequence is UPF0502 protein Sde_2426 (223 aa).

This sequence belongs to the UPF0502 family.

The polypeptide is UPF0502 protein Sde_2426 (Saccharophagus degradans (strain 2-40 / ATCC 43961 / DSM 17024)).